Here is a 334-residue protein sequence, read N- to C-terminus: DNA polymerase III subunit delta' (334 aa).

The DNA polymerase III holoenzyme complex contains at least 10 different subunits organized into 3 functionally essential subassemblies: the Pol III core, the beta sliding clamp processivity factor and the clamp-loading complex. The Pol III core (subunits alpha, epsilon and theta) contains the polymerase and the 3'-5' exonuclease proofreading activities. The polymerase is tethered to the template via the dimeric beta sliding clamp processivity factor. The clamp-loading complex (also called gamma complex) assembles the beta sliding clamp onto the primed template and plays a central role in the organization and communication at the replication fork. The clamp-loading complex contains delta, delta', psi and chi, and 3 copies of either or both of two different DnaX proteins, gamma and tau. The DNA replisome complex has a single clamp loader (3 tau and 1 each of delta, delta', psi and chi subunits) which binds 3 Pol III cores (1 core on the leading strand and 2 on the lagging strand) each with a beta sliding clamp dimer. Additional proteins in the replisome are other copies of gamma, psi and chi, Ssb, DNA helicase and RNA primase. The clamp loader hydrolyzes ATP to assemble the beta processivity factor onto the primed template and plays a central role in the organization and communication at the replication fork; the minimal complex to load the beta sliding clamp on DNA is delta, delta', gamma.

The enzyme catalyses DNA(n) + a 2'-deoxyribonucleoside 5'-triphosphate = DNA(n+1) + diphosphate. Part of the beta sliding clamp loading complex, which hydrolyzes ATP to load the beta clamp onto primed DNA to form the DNA replication pre-initiation complex. DNA polymerase III is a complex, multichain enzyme responsible for most of the replicative synthesis in bacteria. This DNA polymerase also exhibits 3' to 5' exonuclease activity. The gamma complex (gamma(3),delta,delta') is thought to load beta dimers onto DNA by binding ATP which alters the complex's conformation so it can bind beta sliding clamp dimers and open them at one interface. Primed DNA is recognized, ATP is hydrolyzed releasing the gamma complex and closing the beta sliding clamp ring around the primed DNA. This is DNA polymerase III subunit delta' (holB) from Escherichia coli (strain K12).